Here is an 858-residue protein sequence, read N- to C-terminus: Leucine--tRNA ligase (858 aa).

The 'HIGH' region motif lies at 42–52 (PYPSGRLHMGH). The 'KMSKS' region signature appears at 618 to 622 (KMSKS). Lysine 621 serves as a coordination point for ATP.

It belongs to the class-I aminoacyl-tRNA synthetase family.

It is found in the cytoplasm. The enzyme catalyses tRNA(Leu) + L-leucine + ATP = L-leucyl-tRNA(Leu) + AMP + diphosphate. The chain is Leucine--tRNA ligase from Aliivibrio fischeri (strain MJ11) (Vibrio fischeri).